The primary structure comprises 529 residues: UDP-glucuronosyltransferase 2B23 (529 aa).

Residues 1–24 (MSVKWTSVILLIQLSFYFSSGSCG) form the signal peptide. Residues asparagine 67 and asparagine 68 are each glycosylated (N-linked (GlcNAc...) asparagine). A helical membrane pass occupies residues 494-514 (IGFLLACVATVIFIIMKCCLF).

It belongs to the UDP-glycosyltransferase family. In terms of tissue distribution, expressed in several tissues, including the prostate, mammary gland, epididymis, testis and ovary.

It is found in the microsome membrane. Its subcellular location is the endoplasmic reticulum membrane. The catalysed reaction is glucuronate acceptor + UDP-alpha-D-glucuronate = acceptor beta-D-glucuronoside + UDP + H(+). In terms of biological role, UDPGTs are of major importance in the conjugation and subsequent elimination of potentially toxic xenobiotics and endogenous compounds. This isozyme has glucuronidating capacity on 6 steroids and the bile acid, hyodeoxycholic acid. May potentially play an important role in estrogen and androgen catabolism in peripheral steroid target tissues. This Macaca fascicularis (Crab-eating macaque) protein is UDP-glucuronosyltransferase 2B23 (UGT2B23).